The chain runs to 505 residues: MSRSYNDELQFLEKISKNCWRIKKGFVPNMQVEGVFYVNDSLEKLMFEELRNACRGGGVGGFLPAMKQIGNVAALPGIVHRSIGLPDVHSGYGFAIGNMAAFDMNDPEAVVSPGGVGFDINCGVRLLRTNLDESDVQPVKEQLAQAMFDHIPVGVGSKGVIPMNAKDLEEALEMGVDWSLREGYAWAEDKEHCEEYGRMLQADPNKVSARAKKRGLPQLGTLGAGNHYAEIQVVDEIFNEYAAKKMGIDHKGQVCVMIHSGSRGLGHQVATDALVAMEKAMKRDKIIVNDRQLACARIASPEGQDYLKGMAAAGNYAWVNRSSMTFLTRQAFAKVFNTTPDDLDLHVIYDVSHNIAKVEQHVVDGKERTLLVHRKGSTRAFPPHHPLIAVDYQLTGQPVLIGGTMGTCSYVLTGTEQGMTETFGTTCHGAGRALSRAKSRRNLDFQDVLDKLADMGIAIRVASPKLVMEEAPESYKNVTDVVNTCHDAGISKKAIKLRPIAVIKG.

Mn(2+) contacts are provided by Asp119, Cys122, His227, and His259. 226-230 (NHYAE) serves as a coordination point for GMP. Ser300 bears the Phosphoserine mark. His353 is a Mn(2+) binding site. GMP-binding positions include 353 to 354 (HN), 402 to 405 (GGTM), Ser409, and 428 to 431 (HGAG). Residue His428 is the GMP-histidine intermediate of the active site. Residue Lys496 forms a Glycyl lysine isopeptide (Lys-Gly) (interchain with G-Cter in SUMO2) linkage. Position 504 (Lys504) interacts with GMP.

The protein belongs to the RtcB family. Catalytic component of the tRNA-splicing ligase complex. Mn(2+) is required as a cofactor.

The protein localises to the nucleus. It is found in the cytoplasm. It catalyses the reaction a 3'-end 3'-phospho-ribonucleotide-RNA + a 5'-end dephospho-ribonucleoside-RNA + GTP = a ribonucleotidyl-ribonucleotide-RNA + GMP + diphosphate. It carries out the reaction a 3'-end 2',3'-cyclophospho-ribonucleotide-RNA + a 5'-end dephospho-ribonucleoside-RNA + GTP + H2O = a ribonucleotidyl-ribonucleotide-RNA + GMP + diphosphate + H(+). Its function is as follows. Catalytic subunit of the tRNA-splicing ligase complex that acts by directly joining spliced tRNA halves to mature-sized tRNAs by incorporating the precursor-derived splice junction phosphate into the mature tRNA as a canonical 3',5'-phosphodiester. May act as an RNA ligase with broad substrate specificity, and may function toward other RNAs. This is RNA-splicing ligase RtcB homolog from Bos taurus (Bovine).